The sequence spans 688 residues: Potassium-transporting ATPase ATP-binding subunit (688 aa).

The next 4 membrane-spanning stretches (helical) occupy residues Pro34–Leu54, Ala62–Ala82, Val219–Leu239, and Val260–Ile280. The active-site 4-aspartylphosphate intermediate is Asp313. ATP-binding positions include Asp350, Glu354, Phe383 to Ser390, and Lys401. Positions 524 and 528 each coordinate Mg(2+). 3 consecutive transmembrane segments (helical) span residues Phe594–Met614, Ala622–Leu642, and Ile662–Leu682.

This sequence belongs to the cation transport ATPase (P-type) (TC 3.A.3) family. Type IA subfamily. In terms of assembly, the system is composed of three essential subunits: KdpA, KdpB and KdpC.

It localises to the cell inner membrane. It carries out the reaction K(+)(out) + ATP + H2O = K(+)(in) + ADP + phosphate + H(+). Its function is as follows. Part of the high-affinity ATP-driven potassium transport (or Kdp) system, which catalyzes the hydrolysis of ATP coupled with the electrogenic transport of potassium into the cytoplasm. This subunit is responsible for energy coupling to the transport system and for the release of the potassium ions to the cytoplasm. The polypeptide is Potassium-transporting ATPase ATP-binding subunit (Yersinia pestis bv. Antiqua (strain Antiqua)).